We begin with the raw amino-acid sequence, 319 residues long: MKQVTGFAPASVGNVACGFDVLGFALTEPGDEVTVSFTDDENSPAQVIISKIIGDGGALPTDPYKNTASIVVIKFLEFLKTHKGIEQSGTFSIELKKNLPLSSGMGSSASSAAAALIAANSLLGSPCTKMELVPFVMEGERIACGSIHADNAAPAMLGNFILTRSYDPLDLIPISTPPELYCSLVHPHIEVPTSHARSILKKEIALSSAVRQWGNVGALVAGLLRCDYELIGRALEDVVAEPVRAPLIPGFYDVKHAALDAGALGGSIAGSGPSIFAFSDSLAKAETIAKAMQETFRKVSNLESDIWFCPVSREGSRIL.

100–110 (PLSSGMGSSAS) serves as a coordination point for ATP.

The protein belongs to the GHMP kinase family. Homoserine kinase subfamily.

It localises to the cytoplasm. It carries out the reaction L-homoserine + ATP = O-phospho-L-homoserine + ADP + H(+). The protein operates within amino-acid biosynthesis; L-threonine biosynthesis; L-threonine from L-aspartate: step 4/5. In terms of biological role, catalyzes the ATP-dependent phosphorylation of L-homoserine to L-homoserine phosphate. The protein is Homoserine kinase of Chloroherpeton thalassium (strain ATCC 35110 / GB-78).